The following is a 1090-amino-acid chain: Exoglucanase B (1090 aa).

The N-terminal stretch at 1–33 is a signal peptide; it reads MSSTTRRRSAWVAAATVGVSSFLAVAGITPAIA. Positions 34–53 are excised as a propeptide; sequence AAGAGQPATVTVPAASPVRA. The tract at residues 54-699 is catalytic; it reads AVDGEYAQRF…RLFDDGTTTP (646 aa). The active-site Nucleophile is Asp-513. 3 Fibronectin type-III domains span residues 706 to 791, 797 to 887, and 897 to 984; these read VPTG…TKAT, APSV…TKSD, and VPAG…TKTP. Residues 983–1090 enclose the CBM2 domain; it reads TPQTGGSCSV…SFTLNGASCT (108 aa). Cys-990 and Cys-1089 form a disulfide bridge. Residues 1069 to 1090 are disordered; sequence NGSHTGQNPNPASFTLNGASCT. The segment covering 1070–1090 has biased composition (polar residues); it reads GSHTGQNPNPASFTLNGASCT.

The protein belongs to the glycosyl hydrolase 48 (cellulase L) family.

It catalyses the reaction Hydrolysis of (1-&gt;4)-beta-D-glucosidic linkages in cellulose and cellotetraose, releasing cellobiose from the non-reducing ends of the chains.. In terms of biological role, hydrolyzes cellohexaose to a mixture of cellotetraose, cellotriose and cellobiose, with only a trace of glucose. It hydrolyzed cellopentaose to cellotriose and cellobiose, and cellotetraose to cellobiose, but it did not hydrolyze cellotriose. Also has weak endoglucanase activity. Hydrolyzes glucosidic bonds with inversion of anomeric configuration. The sequence is that of Exoglucanase B (cbhB) from Cellulomonas fimi (strain ATCC 484 / DSM 20113 / JCM 1341 / CCUG 24087 / LMG 16345 / NBRC 15513 / NCIMB 8980 / NCTC 7547 / NRS-133).